The sequence spans 504 residues: MSQQQQGAEQAPDLNNELQTRREKLAALRENGIAFPNDFRRENISEDLHAKYDDKTQEELEALNIDVTVGGRMMTRRIMGKASFVTLQDMGGRIQLYVARDDLPEGIYNEQFKKWDLGDILGARGKLFKTKTGELSIHCTELRLLTKALRPLPDKFHGLADQETRYRQRYLDLIANEESRKTFQIRSQVLLALRSFMVSKGFMEVETPMMQVIPGGAAARPFITHHNALDIDMYLRIAPELYLKRLVVGGFERVFEINRNFRNEGVSPRHNPEFTMMELYMAYADYKDLIVLIEELFRTLTQNILGNTLVKYGEQEFDFGKPFAQMTMKEAICKYRPETNIADLDDMDKVVAIAESLGIEVEKGWGLGRVQCEIFEETAESHLIQPTFITEYPAEVSPLARRNDANPFITDRFEFFIGGREIGNGFSELNDAEDQAERFAEQVRQKDEGDDEAMFYDEDYVTALEHGMPPTAGLGIGIDRMIMLLTDSHTIRDVILFPAMRPQK.

Glutamate 414 and glutamate 421 together coordinate Mg(2+).

This sequence belongs to the class-II aminoacyl-tRNA synthetase family. As to quaternary structure, homodimer. The cofactor is Mg(2+).

Its subcellular location is the cytoplasm. The catalysed reaction is tRNA(Lys) + L-lysine + ATP = L-lysyl-tRNA(Lys) + AMP + diphosphate. This is Lysine--tRNA ligase from Photorhabdus laumondii subsp. laumondii (strain DSM 15139 / CIP 105565 / TT01) (Photorhabdus luminescens subsp. laumondii).